Reading from the N-terminus, the 280-residue chain is Meiotic spindle formation protein 2 (280 aa).

Residues 1-104 (MSGLDDRKKL…LPKSSPESSV (104 aa)) are disordered. A compositionally biased stretch (basic and acidic residues) spans 72-92 (LHSESKKELSRNPVSRGEEHS). The segment covering 93–104 (SSLPKSSPESSV) has biased composition (low complexity).

As to quaternary structure, interacts with mei-1.

Its subcellular location is the cytoplasm. It localises to the cytoskeleton. It is found in the spindle pole. Functionally, forms a heterodimeric complex in conjunction with mei-1 which severs microtubules in vitro in an ATP-dependent manner. This activity may promote rapid reorganization of cellular microtubule arrays. May act to target mei-1 within the cell. Required specifically for meiotic spindle formation in the female germline. This Caenorhabditis elegans protein is Meiotic spindle formation protein 2 (mei-2).